Here is a 203-residue protein sequence, read N- to C-terminus: Glycerol-3-phosphate acyltransferase (203 aa).

Transmembrane regions (helical) follow at residues 3–23 (ILLATVAAYLIGSVSFAVVVS), 51–71 (KAAILTLVGDAFKGWLAVWLV), 74–94 (FGIGGEIGVALAAIAVFLGHL), 116–136 (AVHPVLGLATALTWLIVAFFF), 140–160 (SLAALVAAVFAPIFDVFLFGT), and 164–178 (PVAWAVLAMSVLLIW).

The protein belongs to the PlsY family. As to quaternary structure, probably interacts with PlsX.

The protein resides in the cell inner membrane. The enzyme catalyses an acyl phosphate + sn-glycerol 3-phosphate = a 1-acyl-sn-glycero-3-phosphate + phosphate. It participates in lipid metabolism; phospholipid metabolism. Its function is as follows. Catalyzes the transfer of an acyl group from acyl-phosphate (acyl-PO(4)) to glycerol-3-phosphate (G3P) to form lysophosphatidic acid (LPA). This enzyme utilizes acyl-phosphate as fatty acyl donor, but not acyl-CoA or acyl-ACP. The protein is Glycerol-3-phosphate acyltransferase of Burkholderia mallei (strain ATCC 23344).